The following is a 616-amino-acid chain: Centrosomal protein of 70 kDa (616 aa).

Coiled coils occupy residues 96–210 and 273–335; these read EETT…EEER and NYKG…NIKL. The stretch at 502-535 is one TPR repeat; that stretch reads NGVFPRMNEVYTRLGEMNNAVRNLQELLELDSSS.

In terms of assembly, directly interacts with tubulin-gamma; this interaction determines centrosomal localization.

It is found in the cytoplasm. The protein localises to the cytoskeleton. The protein resides in the microtubule organizing center. It localises to the centrosome. Plays a role in the organization of both preexisting and nascent microtubules in interphase cells. During mitosis, required for the organization and orientation of the mitotic spindle. This chain is Centrosomal protein of 70 kDa (Cep70), found in Mus musculus (Mouse).